Reading from the N-terminus, the 75-residue chain is Caerin 1.11 (75 aa).

A signal peptide spans 1–22 (MASLKKSLFLVLFLGFVSVSIC). A propeptide spanning residues 23-49 (EEEKRQEDEDEHEEEGENQEEGSEEKR) is cleaved from the precursor. The interval 24 to 48 (EEKRQEDEDEHEEEGENQEEGSEEK) is disordered. Residues 30-45 (DEDEHEEEGENQEEGS) show a composition bias toward acidic residues. L74 carries the leucine amide modification.

It belongs to the frog skin active peptide (FSAP) family. Caerin subfamily. Expressed by the skin glands.

The protein resides in the secreted. The protein localises to the target cell membrane. Functionally, cationic amphipathic alpha-helical antimicrobial peptide with weak or no activity against both Gram-positive and Gram-negative bacteria. Is weakly active against E.coli (MIC=25 uM), E.cloacae (MIC=50 uM), K.pneumoniae (MIC=25 uM), and S.haemolyticus (MIC=50 uM). Has no activity against S.typhimurium, S.enteritidis, B.megaterium, and S.aureus (MIC&gt;100 uM). This chain is Caerin 1.11, found in Ranoidea caerulea (Green tree frog).